A 192-amino-acid chain; its full sequence is MEVLFEAKVGDITLKLAQGDITQYPAKAIVNAANKRLEHGGGVAYAIAKACAGDAGLYTEISKKAMREQFGRDYIDHGEVVVTPAMNLEERGIKYVFHTVGPICSGMWSEELKEKLYKAFLGPLEKAEEMGVESIAFPAVSAGIYGCDLEKVVETFLEAVKNFKGSAVKEVALVIYDRKSAEVALKVFERSL.

One can recognise a Macro domain in the interval 1-192 (MEVLFEAKVG…VALKVFERSL (192 aa)). Residues 19-21 (GDI), 32-34 (AAN), 39-44 (HGGGVA), and 140-146 (VSAGIYG) each bind substrate.

It carries out the reaction 5-O-(ADP-D-ribosyl)-L-glutamyl-[protein] + H2O = L-glutamyl-[protein] + ADP-D-ribose + H(+). It catalyses the reaction 4-O-(ADP-D-ribosyl)-L-aspartyl-[protein] + H2O = L-aspartyl-[protein] + ADP-D-ribose + H(+). The enzyme catalyses alpha-NAD(+) + H2O = ADP-D-ribose + nicotinamide + H(+). Removes ADP-ribose from aspartate and glutamate residues in proteins bearing a single ADP-ribose moiety. Inactive towards proteins bearing poly-ADP-ribose. Catalyzes removal of a phosphate group from ADP-ribose 1''-phosphate (Appr1p), but with low efficiency. The polypeptide is ADP-ribose glycohydrolase AF_1521 (Archaeoglobus fulgidus (strain ATCC 49558 / DSM 4304 / JCM 9628 / NBRC 100126 / VC-16)).